Reading from the N-terminus, the 725-residue chain is Phosphoribosylformylglycinamidine synthase subunit PurL (725 aa).

His-41 is an active-site residue. 2 residues coordinate ATP: Tyr-44 and Lys-83. Glu-85 is a Mg(2+) binding site. Residues 86–89 and Arg-108 contribute to the substrate site; that span reads SHNH. Residue His-87 is the Proton acceptor of the active site. Residue Asp-109 participates in Mg(2+) binding. Gln-231 is a binding site for substrate. Residue Asp-259 participates in Mg(2+) binding. 303-305 is a substrate binding site; it reads ESQ. The ATP site is built by Asp-485 and Gly-522. Asn-523 lines the Mg(2+) pocket. Ser-525 contributes to the substrate binding site.

The protein belongs to the FGAMS family. Monomer. Part of the FGAM synthase complex composed of 1 PurL, 1 PurQ and 2 PurS subunits.

It localises to the cytoplasm. The catalysed reaction is N(2)-formyl-N(1)-(5-phospho-beta-D-ribosyl)glycinamide + L-glutamine + ATP + H2O = 2-formamido-N(1)-(5-O-phospho-beta-D-ribosyl)acetamidine + L-glutamate + ADP + phosphate + H(+). The protein operates within purine metabolism; IMP biosynthesis via de novo pathway; 5-amino-1-(5-phospho-D-ribosyl)imidazole from N(2)-formyl-N(1)-(5-phospho-D-ribosyl)glycinamide: step 1/2. Functionally, part of the phosphoribosylformylglycinamidine synthase complex involved in the purines biosynthetic pathway. Catalyzes the ATP-dependent conversion of formylglycinamide ribonucleotide (FGAR) and glutamine to yield formylglycinamidine ribonucleotide (FGAM) and glutamate. The FGAM synthase complex is composed of three subunits. PurQ produces an ammonia molecule by converting glutamine to glutamate. PurL transfers the ammonia molecule to FGAR to form FGAM in an ATP-dependent manner. PurS interacts with PurQ and PurL and is thought to assist in the transfer of the ammonia molecule from PurQ to PurL. The sequence is that of Phosphoribosylformylglycinamidine synthase subunit PurL from Thermus thermophilus (strain ATCC BAA-163 / DSM 7039 / HB27).